A 376-amino-acid chain; its full sequence is Guanine nucleotide-binding protein G(s) subunit alpha (376 aa).

Residue Gly2 is the site of N-palmitoyl glycine attachment. The S-palmitoyl cysteine moiety is linked to residue Cys3. One can recognise a G-alpha domain in the interval 36 to 376; that stretch reads GTHRLLLLGA…RMHLRQYELL (341 aa). Positions 39–52 are G1 motif; it reads RLLLLGAGESGKST. GTP contacts are provided by residues 44 to 51, 180 to 186, 205 to 209, 274 to 277, and Ala348; these read GAGESGKS, LRCRVLT, DVGGQ, and NKQD. Mg(2+) contacts are provided by Ser51 and Thr186. The G2 motif stretch occupies residues 178 to 186; sequence DILRCRVLT. Residues 201 to 210 form a G3 motif region; that stretch reads FHMFDVGGQR. The interval 270 to 277 is G4 motif; the sequence is ILFLNKQD. The segment at 346–351 is G5 motif; the sequence is TCAVDT.

This sequence belongs to the G-alpha family. G(s) subfamily. G proteins are composed of 3 units; alpha, beta and gamma. The alpha chain contains the guanine nucleotide binding site.

Its function is as follows. Guanine nucleotide-binding proteins (G proteins) are involved as modulators or transducers in various transmembrane signaling systems. The G(s) protein is involved in hormonal regulation of adenylate cyclase: it activates the cyclase in response to beta-adrenergic stimuli. The chain is Guanine nucleotide-binding protein G(s) subunit alpha from Lymnaea stagnalis (Great pond snail).